A 192-amino-acid polypeptide reads, in one-letter code: 7-methyl-GTP pyrophosphatase (192 aa).

The active-site Proton acceptor is the Asp-69.

It belongs to the Maf family. YceF subfamily. The cofactor is a divalent metal cation.

Its subcellular location is the cytoplasm. It catalyses the reaction N(7)-methyl-GTP + H2O = N(7)-methyl-GMP + diphosphate + H(+). Functionally, nucleoside triphosphate pyrophosphatase that hydrolyzes 7-methyl-GTP (m(7)GTP). May have a dual role in cell division arrest and in preventing the incorporation of modified nucleotides into cellular nucleic acids. This is 7-methyl-GTP pyrophosphatase (maf-2) from Pseudomonas putida (strain ATCC 47054 / DSM 6125 / CFBP 8728 / NCIMB 11950 / KT2440).